The following is a 415-amino-acid chain: Serine hydroxymethyltransferase (415 aa).

(6S)-5,6,7,8-tetrahydrofolate-binding positions include Leu121 and 125–127 (GHL). Lys230 is subject to N6-(pyridoxal phosphate)lysine.

It belongs to the SHMT family. In terms of assembly, homodimer. The cofactor is pyridoxal 5'-phosphate.

It localises to the cytoplasm. It carries out the reaction (6R)-5,10-methylene-5,6,7,8-tetrahydrofolate + glycine + H2O = (6S)-5,6,7,8-tetrahydrofolate + L-serine. It participates in one-carbon metabolism; tetrahydrofolate interconversion. The protein operates within amino-acid biosynthesis; glycine biosynthesis; glycine from L-serine: step 1/1. Functionally, catalyzes the reversible interconversion of serine and glycine with tetrahydrofolate (THF) serving as the one-carbon carrier. This reaction serves as the major source of one-carbon groups required for the biosynthesis of purines, thymidylate, methionine, and other important biomolecules. Also exhibits THF-independent aldolase activity toward beta-hydroxyamino acids, producing glycine and aldehydes, via a retro-aldol mechanism. The protein is Serine hydroxymethyltransferase of Syntrophomonas wolfei subsp. wolfei (strain DSM 2245B / Goettingen).